Here is a 215-residue protein sequence, read N- to C-terminus: Probable phosphoglycerate mutase GpmB (215 aa).

Substrate is bound by residues 8 to 15 (RHGESEWN), 21 to 22 (QG), arginine 58, arginine 60, 82 to 85 (ELHM), and 151 to 152 (GI). Histidine 9 functions as the Tele-phosphohistidine intermediate in the catalytic mechanism. Glutamate 82 functions as the Proton donor/acceptor in the catalytic mechanism.

It belongs to the phosphoglycerate mutase family. GpmB subfamily.

It carries out the reaction (2R)-2-phosphoglycerate = (2R)-3-phosphoglycerate. It participates in carbohydrate degradation; glycolysis; pyruvate from D-glyceraldehyde 3-phosphate: step 3/5. This Photorhabdus laumondii subsp. laumondii (strain DSM 15139 / CIP 105565 / TT01) (Photorhabdus luminescens subsp. laumondii) protein is Probable phosphoglycerate mutase GpmB.